Reading from the N-terminus, the 648-residue chain is Chaperone protein HtpG (648 aa).

The interval 1–353 (MNARVEQLEF…AQDMSLNVSR (353 aa)) is a; substrate-binding. The segment at 354–567 (EILQQDRQIK…TFGITPALAR (214 aa)) is b. The segment at 568 to 648 (IYRATGQDVP…LLADRLTRTL (81 aa)) is c.

This sequence belongs to the heat shock protein 90 family. Homodimer.

The protein resides in the cytoplasm. Molecular chaperone. Has ATPase activity. The sequence is that of Chaperone protein HtpG from Mycobacterium ulcerans (strain Agy99).